We begin with the raw amino-acid sequence, 129 residues long: DNA-directed RNA polymerase II subunit RPB9 (129 aa).

The Zn(2+) site is built by cysteine 21, cysteine 24, cysteine 43, cysteine 46, cysteine 90, cysteine 93, cysteine 118, and cysteine 123. The segment at cysteine 21–cysteine 46 adopts a C4-type zinc-finger fold. The segment at glutamate 86–threonine 128 adopts a TFIIS-type zinc-finger fold.

Belongs to the archaeal RpoM/eukaryotic RPA12/RPB9/RPC11 RNA polymerase family. In terms of assembly, component of the RNA polymerase II (Pol II) complex consisting of 12 subunits.

The protein localises to the nucleus. It is found in the nucleolus. Functionally, DNA-dependent RNA polymerase catalyzes the transcription of DNA into RNA using the four ribonucleoside triphosphates as substrates. Component of RNA polymerase II which synthesizes mRNA precursors and many functional non-coding RNAs. Pol II is the central component of the basal RNA polymerase II transcription machinery. It is composed of mobile elements that move relative to each other. RPB9 is part of the upper jaw surrounding the central large cleft and thought to grab the incoming DNA template. The polypeptide is DNA-directed RNA polymerase II subunit RPB9 (Drosophila melanogaster (Fruit fly)).